The following is a 277-amino-acid chain: Ribosomal RNA small subunit methyltransferase G (277 aa).

S-adenosyl-L-methionine is bound by residues Gly-128, Phe-133, 188–189 (SE), and Arg-198.

It belongs to the methyltransferase superfamily. RNA methyltransferase RsmG family.

Its subcellular location is the cytoplasm. The catalysed reaction is guanosine(527) in 16S rRNA + S-adenosyl-L-methionine = N(7)-methylguanosine(527) in 16S rRNA + S-adenosyl-L-homocysteine. Specifically methylates the N7 position of guanine in position 527 of 16S rRNA. This Nitrobacter winogradskyi (strain ATCC 25391 / DSM 10237 / CIP 104748 / NCIMB 11846 / Nb-255) protein is Ribosomal RNA small subunit methyltransferase G.